The sequence spans 114 residues: uncharacterized protein (114 aa).

Residues 6 to 114 enclose the HIT domain; it reads IFKNIIQRKI…LGGKKLKSFS (109 aa).

This is an uncharacterized protein from Buchnera aphidicola subsp. Acyrthosiphon pisum (strain APS) (Acyrthosiphon pisum symbiotic bacterium).